An 86-amino-acid chain; its full sequence is Weak neurotoxin WNTX34 (86 aa).

The signal sequence occupies residues 1–21 (MKTLLLTLVVVTIVCLDLGYS). Intrachain disulfides connect C24/C45, C27/C32, C38/C63, C67/C78, and C79/C84.

The protein belongs to the three-finger toxin family. Ancestral subfamily. Orphan group II sub-subfamily. As to expression, expressed by the venom gland.

Its subcellular location is the secreted. In terms of biological role, binds with low affinity to muscular (alpha-1-beta-1-delta-epsilon/CHRNA1-CHRNB1-CHRND-CHRNE) and very low affinity to neuronal (alpha-7/CHRNA7) nicotinic acetylcholine receptor (nAChR). The sequence is that of Weak neurotoxin WNTX34 from Ophiophagus hannah (King cobra).